The primary structure comprises 255 residues: NAP1-related protein 2 (255 aa).

A coiled-coil region spans residues 19-60 (IDAELVLSIEKLQEIQDDLEKINEKASDEVLEVEQKYNVIRK). A disordered region spans residues 213-255 (NPLTYFNNDADEEDFDGDDDGDEEEKEGDSDEDDDEEDEVGEE). Positions 221–255 (DADEEDFDGDDDGDEEEKEGDSDEDDDEEDEVGEE) are enriched in acidic residues.

The protein belongs to the nucleosome assembly protein (NAP) family. In terms of assembly, can form homomeric and heteromeric protein complexes with NRP1. Binds histones H2A and H2B and associates with chromatin in vivo. Ubiquitous.

The protein localises to the cytoplasm. The protein resides in the nucleus. Acts as a histone H2A/H2B chaperone in nucleosome assembly, playing a critical role for the correct expression of genes involved in root proliferation and patterning. Required with NRP1 for the maintenance of cell proliferation and differentiation in postembryonic root growth. Involved in both intramolecular and intermolecular somatic homologous recombination. The polypeptide is NAP1-related protein 2 (NRP2) (Arabidopsis thaliana (Mouse-ear cress)).